We begin with the raw amino-acid sequence, 360 residues long: Cysteine proteinase 2 (360 aa).

The signal sequence occupies residues M1–A19. Residues V20–A142 constitute a propeptide, activation peptide. N125 carries an N-linked (GlcNAc...) asparagine glycan. 2 disulfide bridges follow: C164/C207 and C198/C240. Residue C167 is part of the active site. N-linked (GlcNAc...) asparagine glycosylation is present at N256. Cysteines 298 and 348 form a disulfide. Active-site residues include H307 and N327.

Belongs to the peptidase C1 family. As to expression, expressed at the onset of germination.

The protein resides in the vacuole. In terms of biological role, involved in the degradation of the storage protein zein. May play a role in proteolysis during emergencies. This chain is Cysteine proteinase 2 (CCP2), found in Zea mays (Maize).